The following is a 299-amino-acid chain: Lipoyl synthase 2 (299 aa).

Residues Cys45, Cys50, Cys56, Cys71, Cys75, Cys78, and Ser295 each contribute to the [4Fe-4S] cluster site. The region spanning 57-284 (YASGTATFLL…KSFCSKLGFK (228 aa)) is the Radical SAM core domain.

Belongs to the radical SAM superfamily. Lipoyl synthase family. Requires [4Fe-4S] cluster as cofactor.

It is found in the cytoplasm. The enzyme catalyses [[Fe-S] cluster scaffold protein carrying a second [4Fe-4S](2+) cluster] + N(6)-octanoyl-L-lysyl-[protein] + 2 oxidized [2Fe-2S]-[ferredoxin] + 2 S-adenosyl-L-methionine + 4 H(+) = [[Fe-S] cluster scaffold protein] + N(6)-[(R)-dihydrolipoyl]-L-lysyl-[protein] + 4 Fe(3+) + 2 hydrogen sulfide + 2 5'-deoxyadenosine + 2 L-methionine + 2 reduced [2Fe-2S]-[ferredoxin]. It participates in protein modification; protein lipoylation via endogenous pathway; protein N(6)-(lipoyl)lysine from octanoyl-[acyl-carrier-protein]: step 2/2. Functionally, catalyzes the radical-mediated insertion of two sulfur atoms into the C-6 and C-8 positions of the octanoyl moiety bound to the lipoyl domains of lipoate-dependent enzymes, thereby converting the octanoylated domains into lipoylated derivatives. The polypeptide is Lipoyl synthase 2 (Prochlorococcus marinus subsp. pastoris (strain CCMP1986 / NIES-2087 / MED4)).